Here is a 452-residue protein sequence, read N- to C-terminus: Bifunctional protein GlmU (452 aa).

A pyrophosphorylase region spans residues 1-226; that stretch reads MNFSAVILAA…PIEVEGVNDR (226 aa). UDP-N-acetyl-alpha-D-glucosamine is bound by residues 8–11, Lys-22, Gln-73, 78–79, 100–102, Gly-137, Glu-151, Asn-166, and Asn-224; these read LAAG, GT, and YGD. Residue Asp-102 participates in Mg(2+) binding. Asn-224 contributes to the Mg(2+) binding site. A linker region spans residues 227 to 247; that stretch reads AQLARLERAYQAAQAQKLLEQ. Residues 248 to 452 are N-acetyltransferase; the sequence is GVMLRDPSRF…IANWQRPTKK (205 aa). Residues Arg-330 and Lys-348 each contribute to the UDP-N-acetyl-alpha-D-glucosamine site. The active-site Proton acceptor is His-360. Positions 363 and 374 each coordinate UDP-N-acetyl-alpha-D-glucosamine. Residues Ala-377, 383 to 384, Ser-402, Ala-420, and Arg-437 contribute to the acetyl-CoA site; that span reads NY.

This sequence in the N-terminal section; belongs to the N-acetylglucosamine-1-phosphate uridyltransferase family. It in the C-terminal section; belongs to the transferase hexapeptide repeat family. In terms of assembly, homotrimer. Mg(2+) is required as a cofactor.

It is found in the cytoplasm. The enzyme catalyses alpha-D-glucosamine 1-phosphate + acetyl-CoA = N-acetyl-alpha-D-glucosamine 1-phosphate + CoA + H(+). It carries out the reaction N-acetyl-alpha-D-glucosamine 1-phosphate + UTP + H(+) = UDP-N-acetyl-alpha-D-glucosamine + diphosphate. It functions in the pathway nucleotide-sugar biosynthesis; UDP-N-acetyl-alpha-D-glucosamine biosynthesis; N-acetyl-alpha-D-glucosamine 1-phosphate from alpha-D-glucosamine 6-phosphate (route II): step 2/2. Its pathway is nucleotide-sugar biosynthesis; UDP-N-acetyl-alpha-D-glucosamine biosynthesis; UDP-N-acetyl-alpha-D-glucosamine from N-acetyl-alpha-D-glucosamine 1-phosphate: step 1/1. The protein operates within bacterial outer membrane biogenesis; LPS lipid A biosynthesis. In terms of biological role, catalyzes the last two sequential reactions in the de novo biosynthetic pathway for UDP-N-acetylglucosamine (UDP-GlcNAc). The C-terminal domain catalyzes the transfer of acetyl group from acetyl coenzyme A to glucosamine-1-phosphate (GlcN-1-P) to produce N-acetylglucosamine-1-phosphate (GlcNAc-1-P), which is converted into UDP-GlcNAc by the transfer of uridine 5-monophosphate (from uridine 5-triphosphate), a reaction catalyzed by the N-terminal domain. This is Bifunctional protein GlmU from Aliivibrio fischeri (strain MJ11) (Vibrio fischeri).